A 123-amino-acid chain; its full sequence is Gamma-synuclein (123 aa).

2 tandem repeats follow at residues 20–30 (EKTKQGVTEAA) and 31–41 (EKTKEGVMYVG). The 4 X 11 AA tandem repeats of [EGSA]-K-T-K-[EQ]-[GQ]-V-X(4) stretch occupies residues 20–67 (EKTKQGVTEAAEKTKEGVMYVGTKTKGERGTSVTSVAEKTKEQANAVS). The stretch at 42-56 (TKTKGERGTSVTSVA) is one 3; approximate repeat. Repeat unit 4 spans residues 57 to 67 (EKTKEQANAVS). A phosphoserine mark is found at Ser-67 and Ser-72. The segment at 93–123 (GVVRKEDLEPPAQDQEAKEQEEGEEAKSGGD) is disordered. Residues 107–123 (QEAKEQEEGEEAKSGGD) show a composition bias toward basic and acidic residues. Ser-120 carries the post-translational modification Phosphoserine; by BARK1, CaMK2 and CK2.

It belongs to the synuclein family. As to quaternary structure, may be a centrosome-associated protein. Interacts with MYOC; affects its secretion and its aggregation. In terms of processing, phosphorylated. Phosphorylation by GRK5 appears to occur on residues distinct from the residue phosphorylated by other kinases. As to expression, specifically expressed in the peripheral nervous system. High expression in motoneurons of the brainstem. Also found in neurons of many other brain regions including the cerebellar cortex, thalamus, hypothalamus and CA1, CA2, CA3 and CA4 regions of the hippocampus.

The protein resides in the cytoplasm. It is found in the perinuclear region. Its subcellular location is the cytoskeleton. The protein localises to the microtubule organizing center. It localises to the centrosome. The protein resides in the spindle. Functionally, plays a role in neurofilament network integrity. May be involved in modulating axonal architecture during development and in the adult. In vitro, increases the susceptibility of neurofilament-H to calcium-dependent proteases. May also function in modulating the keratin network in skin. Activates the MAPK and Elk-1 signal transduction pathway. The polypeptide is Gamma-synuclein (Sncg) (Rattus norvegicus (Rat)).